We begin with the raw amino-acid sequence, 431 residues long: MNPTLAVLGAGAKAVAVAAKASVLRDMGVDVPDVIAVERIGVGANWQASGGWTDGAHRLGTSPEKDVGFPYRSALVPRRNAELDERMTRYSWQSYLIATASFAEWIDRGRPAPTHRRWSQYLAWVADHIGLKVIHGEVERLAVTGDRWALCTHETTVQADALMITGPGQAEKSLLPGNPRVLSIAQFWDRAAGHDRINAERVAVIGGGETAASMLNELFRHRVSTITVISPQVTLFTRGEGFFENSLFSDPTDWAALTFDERRDALARTDRGVFSATVQEALLADDRIHHLRGRVAHAVGRQGQIRLTLSTNRGSENFETVHGFDLVIDGSGADPLWFTSLFSQHTLDLLELGLGGPLTADRLQEAIGYDLAVTDVTPKLFLPTLSGLTQGPGFPNLSCLGLLSDRVLGAGIFTPTKHNDTRRSGEHQSFR.

Positions 1 to 21 (MNPTLAVLGAGAKAVAVAAKA) are cleaved as a signal peptide.

This sequence belongs to the lysine N(6)-hydroxylase/L-ornithine N(5)-oxygenase family. FAD serves as cofactor.

The catalysed reaction is L-lysine + NADPH + O2 = N(6)-hydroxy-L-lysine + NADP(+) + H2O. It functions in the pathway siderophore biosynthesis; mycobactin biosynthesis. In terms of biological role, flavoprotein monooxygenase required for N-hydroxylation of the two acylated lysine residues during mycobactin assembly, thus producing the hydroxamate groups necessary for iron sequestration. Is also able, but less efficiently, to hydroxylate L-lysine (non acylated) in vitro. This Mycobacterium bovis (strain ATCC BAA-935 / AF2122/97) protein is L-lysine N6-monooxygenase MbtG (mbtG).